We begin with the raw amino-acid sequence, 262 residues long: Hemin import ATP-binding protein HmuV (262 aa).

Positions 3-244 (LQARNLTLAR…DHMRRVYGIE (242 aa)) constitute an ABC transporter domain. 35–42 (GANGAGKS) serves as a coordination point for ATP.

Belongs to the ABC transporter superfamily. Heme (hemin) importer (TC 3.A.1.14.5) family. In terms of assembly, the complex is composed of two ATP-binding proteins (HmuV), two transmembrane proteins (HmuU) and a solute-binding protein (HmuT).

The protein resides in the cell inner membrane. In terms of biological role, part of the ABC transporter complex HmuTUV involved in hemin import. Responsible for energy coupling to the transport system. The sequence is that of Hemin import ATP-binding protein HmuV from Bordetella pertussis (strain Tohama I / ATCC BAA-589 / NCTC 13251).